The chain runs to 257 residues: 5'-nucleotidase SurE (257 aa).

A divalent metal cation-binding residues include Asp8, Asp9, Ser40, and Asn92.

Belongs to the SurE nucleotidase family. It depends on a divalent metal cation as a cofactor.

The protein localises to the cytoplasm. It catalyses the reaction a ribonucleoside 5'-phosphate + H2O = a ribonucleoside + phosphate. In terms of biological role, nucleotidase that shows phosphatase activity on nucleoside 5'-monophosphates. This is 5'-nucleotidase SurE from Rhizobium rhizogenes (strain K84 / ATCC BAA-868) (Agrobacterium radiobacter).